Here is a 505-residue protein sequence, read N- to C-terminus: Lysine--tRNA ligase (505 aa).

Polar residues predominate over residues Met-1–Leu-11. Positions Met-1 to Leu-23 are disordered. Residues Ser-12 to Leu-23 show a composition bias toward basic and acidic residues. Positions 415 and 422 each coordinate Mg(2+).

The protein belongs to the class-II aminoacyl-tRNA synthetase family. In terms of assembly, homodimer. It depends on Mg(2+) as a cofactor.

It localises to the cytoplasm. It carries out the reaction tRNA(Lys) + L-lysine + ATP = L-lysyl-tRNA(Lys) + AMP + diphosphate. The polypeptide is Lysine--tRNA ligase (Ectopseudomonas mendocina (strain ymp) (Pseudomonas mendocina)).